The primary structure comprises 319 residues: Aspartate carbamoyltransferase catalytic subunit (319 aa).

Carbamoyl phosphate contacts are provided by Arg55 and Thr56. Lys83 contacts L-aspartate. Arg105, His144, and Gln147 together coordinate carbamoyl phosphate. Residues Arg177 and Arg231 each coordinate L-aspartate. The carbamoyl phosphate site is built by Gly272 and Pro273.

This sequence belongs to the aspartate/ornithine carbamoyltransferase superfamily. ATCase family. In terms of assembly, heterododecamer (2C3:3R2) of six catalytic PyrB chains organized as two trimers (C3), and six regulatory PyrI chains organized as three dimers (R2).

The catalysed reaction is carbamoyl phosphate + L-aspartate = N-carbamoyl-L-aspartate + phosphate + H(+). Its pathway is pyrimidine metabolism; UMP biosynthesis via de novo pathway; (S)-dihydroorotate from bicarbonate: step 2/3. Catalyzes the condensation of carbamoyl phosphate and aspartate to form carbamoyl aspartate and inorganic phosphate, the committed step in the de novo pyrimidine nucleotide biosynthesis pathway. This chain is Aspartate carbamoyltransferase catalytic subunit, found in Nocardia farcinica (strain IFM 10152).